We begin with the raw amino-acid sequence, 849 residues long: Disks large homolog 3 (849 aa).

The disordered stretch occupies residues 32 to 101 (DWQVPDPYGP…GKNTPKLNGS (70 aa)). A compositionally biased stretch (gly residues) spans 41-53 (PSGGNGASSGYGG). Residues 57–69 (QTLPSQAGATPTP) show a composition bias toward polar residues. PDZ domains are found at residues 149 to 235 (EIVL…VRRR), 244 to 330 (EVNL…VAKP), and 404 to 484 (KIIL…AQYR). Phosphoserine is present on S157. The region spanning 519 to 589 (KRSLYVRALF…PSKKRVEKKE (71 aa)) is the SH3 domain. One can recognise a Guanylate kinase-like domain in the interval 659 to 834 (ARPVIILGPM…IYNKIKQIIE (176 aa)). Y705 is subject to Phosphotyrosine.

It belongs to the MAGUK family. In terms of assembly, interacts through its PDZ domains with NETO1 and APC. Interacts through its first two PDZ domains with ERBB4. Interacts through its third PDZ domain with NLGN1, and probably with NLGN2 and NLGN3. Interacts through its PDZ domains with GRIN2B and SYNGAP1. Interacts through its guanylate kinase-like domain with DLGAP1, DLGAP2, DLGAP3 and DLGAP4. Interacts with FRMPD4 (via C-terminus). Interacts with LRFN2. Interacts with LRFN1 and LRFN4. Interacts with FLTP. Interacts with DGKI (via PDZ-binding motif).

Functionally, required for learning most likely through its role in synaptic plasticity following NMDA receptor signaling. The protein is Disks large homolog 3 (Dlg3) of Rattus norvegicus (Rat).